Reading from the N-terminus, the 315-residue chain is MTVSPNTAEQAYLDLCKRIIDEGEHRPDRTGTGTKSLFAPPQLRFDLSNDTFPLLTTKKVFSKGIIHELLWFVAGSTDAKILSEKGVKIWEGNGSREFLDKLGLTHRREGDLGPVYGFQWRHFGAEYKDCDSDYTGQGFDQLQDVIKKLKTNPYDRRIIMSAWNPPDFAKMALPPCHVFCQFYVNFPTSSPDPNNPKQAKTAKPKLSCLLYQRSCDMGLGVPFNIASYALLTKMIAHVVDMDCGEFIHTLGDAHVYLDHIDALKEQFERIPKQFPKLVIKEERKNEIKSIDDFKFEDFEIVGYEPYPPIKMKMSV.

DUMP contacts are provided by residues Arg29 and 156–157; that span reads RR. Catalysis depends on Cys176, which acts as the Nucleophile. Residues 213 to 216, Asn224, and 254 to 256 contribute to the dUMP site; these read RSCD and HVY. Asp216 lines the (6R)-5,10-methylene-5,6,7,8-tetrahydrofolate pocket.

This sequence belongs to the thymidylate synthase family. In terms of assembly, homodimer.

It catalyses the reaction dUMP + (6R)-5,10-methylene-5,6,7,8-tetrahydrofolate = 7,8-dihydrofolate + dTMP. It functions in the pathway pyrimidine metabolism; dTTP biosynthesis. The polypeptide is Thymidylate synthase (TMP1) (Candida albicans (strain SC5314 / ATCC MYA-2876) (Yeast)).